The primary structure comprises 206 residues: Small ribosomal subunit protein uS4 (206 aa).

Residues 96–156 form the S4 RNA-binding domain; sequence GRLDNVVYRM…EKAKKQSRVK (61 aa).

This sequence belongs to the universal ribosomal protein uS4 family. Part of the 30S ribosomal subunit. Contacts protein S5. The interaction surface between S4 and S5 is involved in control of translational fidelity.

One of the primary rRNA binding proteins, it binds directly to 16S rRNA where it nucleates assembly of the body of the 30S subunit. In terms of biological role, with S5 and S12 plays an important role in translational accuracy. This is Small ribosomal subunit protein uS4 from Escherichia fergusonii (strain ATCC 35469 / DSM 13698 / CCUG 18766 / IAM 14443 / JCM 21226 / LMG 7866 / NBRC 102419 / NCTC 12128 / CDC 0568-73).